Here is a 426-residue protein sequence, read N- to C-terminus: Serine--tRNA ligase (426 aa).

231-233 (TAE) contacts L-serine. An ATP-binding site is contributed by 262 to 264 (RAE). Glutamate 285 contacts L-serine. 349-352 (EISS) is a binding site for ATP. Serine 385 is a binding site for L-serine.

The protein belongs to the class-II aminoacyl-tRNA synthetase family. Type-1 seryl-tRNA synthetase subfamily. Homodimer. The tRNA molecule binds across the dimer.

It localises to the cytoplasm. It carries out the reaction tRNA(Ser) + L-serine + ATP = L-seryl-tRNA(Ser) + AMP + diphosphate + H(+). The enzyme catalyses tRNA(Sec) + L-serine + ATP = L-seryl-tRNA(Sec) + AMP + diphosphate + H(+). It participates in aminoacyl-tRNA biosynthesis; selenocysteinyl-tRNA(Sec) biosynthesis; L-seryl-tRNA(Sec) from L-serine and tRNA(Sec): step 1/1. Its function is as follows. Catalyzes the attachment of serine to tRNA(Ser). Is also able to aminoacylate tRNA(Sec) with serine, to form the misacylated tRNA L-seryl-tRNA(Sec), which will be further converted into selenocysteinyl-tRNA(Sec). This chain is Serine--tRNA ligase, found in Myxococcus xanthus (strain DK1622).